Reading from the N-terminus, the 457-residue chain is Paired box protein Pax-8 (457 aa).

Positions 9-135 (GHGGLNQLGG…SSINRIIRTK (127 aa)) form a DNA-binding region, paired. The interval 12–68 (GLNQLGGAFVNGRPLPEVVRQRIVDLAHQGVRPCDISRQLRVSHGCVSKILGRYYET) is PAI subdomain. The segment at 87–135 (KVVEKIGDYKRQNPTMFAWEIRDRLLAEGVCDNDTVPSVSSINRIIRTK) is RED subdomain. The segment covering 159-182 (LIPSSAVTPPESPQSDSLGSTYSI) has biased composition (polar residues). The segment at 159-226 (LIPSSAVTPP…SSGPRKHLRT (68 aa)) is disordered. The residue at position 304 (Ser-304) is a Phosphoserine.

Interacts with WWTR1.

The protein localises to the nucleus. Functionally, thought to encode a transcription factor. It may have a role in kidney cell differentiation. May play a regulatory role in mammalian development. The chain is Paired box protein Pax-8 (Pax8) from Rattus norvegicus (Rat).